Here is a 158-residue protein sequence, read N- to C-terminus: SUMO-conjugating enzyme UBC9 (158 aa).

Residues 4 to 157 (IALSRLAQER…VRAQAKKFAP (154 aa)) form the UBC core domain. The tract at residues 13–18 (RKAWRK) is interaction with SUMO1. Cysteine 93 serves as the catalytic Glycyl thioester intermediate.

The protein belongs to the ubiquitin-conjugating enzyme family. In terms of assembly, interacts with SOX9.

It localises to the nucleus. The protein localises to the cytoplasm. It participates in protein modification; protein sumoylation. Accepts the ubiquitin-like proteins SUMO1, SUMO2 and SUMO3 from the UBLE1A-UBLE1B E1 complex and catalyzes their covalent attachment to other proteins with the help of an E3 ligase such as RANBP2 or CBX4. Essential for nuclear architecture and chromosome segregation. The polypeptide is SUMO-conjugating enzyme UBC9 (UBE2I) (Gallus gallus (Chicken)).